The primary structure comprises 214 residues: tRNA (guanine-N(7)-)-methyltransferase (214 aa).

S-adenosyl-L-methionine contacts are provided by Glu-43, Glu-68, Asp-95, and Asp-117. The active site involves Asp-117. Substrate-binding positions include Lys-121, Asp-153, and 191 to 194 (TEYE).

The protein belongs to the class I-like SAM-binding methyltransferase superfamily. TrmB family.

The enzyme catalyses guanosine(46) in tRNA + S-adenosyl-L-methionine = N(7)-methylguanosine(46) in tRNA + S-adenosyl-L-homocysteine. It functions in the pathway tRNA modification; N(7)-methylguanine-tRNA biosynthesis. Functionally, catalyzes the formation of N(7)-methylguanine at position 46 (m7G46) in tRNA. The chain is tRNA (guanine-N(7)-)-methyltransferase from Brevibacillus brevis (strain 47 / JCM 6285 / NBRC 100599).